We begin with the raw amino-acid sequence, 160 residues long: 6,7-dimethyl-8-ribityllumazine synthase (160 aa).

Residues Trp-31, 65–67 (SFE), and 89–91 (CVV) contribute to the 5-amino-6-(D-ribitylamino)uracil site. 94 to 95 (DT) lines the (2S)-2-hydroxy-3-oxobutyl phosphate pocket. His-97 (proton donor) is an active-site residue. 5-amino-6-(D-ribitylamino)uracil is bound at residue Phe-122. Arg-136 lines the (2S)-2-hydroxy-3-oxobutyl phosphate pocket.

The protein belongs to the DMRL synthase family.

The catalysed reaction is (2S)-2-hydroxy-3-oxobutyl phosphate + 5-amino-6-(D-ribitylamino)uracil = 6,7-dimethyl-8-(1-D-ribityl)lumazine + phosphate + 2 H2O + H(+). The protein operates within cofactor biosynthesis; riboflavin biosynthesis; riboflavin from 2-hydroxy-3-oxobutyl phosphate and 5-amino-6-(D-ribitylamino)uracil: step 1/2. Functionally, catalyzes the formation of 6,7-dimethyl-8-ribityllumazine by condensation of 5-amino-6-(D-ribitylamino)uracil with 3,4-dihydroxy-2-butanone 4-phosphate. This is the penultimate step in the biosynthesis of riboflavin. The chain is 6,7-dimethyl-8-ribityllumazine synthase from Parabacteroides distasonis (strain ATCC 8503 / DSM 20701 / CIP 104284 / JCM 5825 / NCTC 11152).